The following is a 106-amino-acid chain: UPF0145 protein BDI_2732 (106 aa).

This sequence belongs to the UPF0145 family.

In Parabacteroides distasonis (strain ATCC 8503 / DSM 20701 / CIP 104284 / JCM 5825 / NCTC 11152), this protein is UPF0145 protein BDI_2732.